The sequence spans 334 residues: Anthranilate phosphoribosyltransferase (334 aa).

5-phospho-alpha-D-ribose 1-diphosphate contacts are provided by residues G81, G84 to D85, T89, N91 to T94, K109 to S117, and A121. G81 lines the anthranilate pocket. Residue S93 participates in Mg(2+) binding. R167 contacts anthranilate. Mg(2+) contacts are provided by D225 and E226.

It belongs to the anthranilate phosphoribosyltransferase family. As to quaternary structure, homodimer. The cofactor is Mg(2+).

The catalysed reaction is N-(5-phospho-beta-D-ribosyl)anthranilate + diphosphate = 5-phospho-alpha-D-ribose 1-diphosphate + anthranilate. It functions in the pathway amino-acid biosynthesis; L-tryptophan biosynthesis; L-tryptophan from chorismate: step 2/5. Catalyzes the transfer of the phosphoribosyl group of 5-phosphorylribose-1-pyrophosphate (PRPP) to anthranilate to yield N-(5'-phosphoribosyl)-anthranilate (PRA). In Actinobacillus pleuropneumoniae serotype 7 (strain AP76), this protein is Anthranilate phosphoribosyltransferase.